The chain runs to 190 residues: Protein LIGHT-DEPENDENT SHORT HYPOCOTYLS 1 (190 aa).

The segment covering 1-26 (MDLISHQPNKNPNSSTQLTPPSSSRY) has biased composition (polar residues). 2 disordered regions span residues 1–28 (MDLISHQPNKNPNSSTQLTPPSSSRYEN) and 145–190 (GVSY…GATV). The ALOG domain maps to 25–152 (RYENQKRRDW…ARGVSYEKKR (128 aa)). Positions 150 to 154 (KKRKR) match the Nuclear localization signal motif. The segment covering 158-179 (QKPQTQPPLQLQQQQQQPQQGQ) has biased composition (low complexity). A compositionally biased stretch (polar residues) spans 180 to 190 (SMMANYSGATV).

The protein belongs to the plant homeotic and developmental regulators ALOG protein family. As to expression, expressed in hypocotyls, shoot apices and lateral root primordia and, weakly, in vascular tissues.

It is found in the nucleus. Its function is as follows. Probable transcription regulator that acts as a developmental regulator by promoting cell growth in response to continuous red (cR), far-red (cFR) and blue (cB) light in a phytochrome-dependent manner, at least during seedling development. The protein is Protein LIGHT-DEPENDENT SHORT HYPOCOTYLS 1 (LSH1) of Arabidopsis thaliana (Mouse-ear cress).